The sequence spans 280 residues: UDP-3-O-acyl-N-acetylglucosamine deacetylase (280 aa).

Histidine 79, histidine 237, and aspartate 241 together coordinate Zn(2+). The Proton donor role is filled by histidine 264.

This sequence belongs to the LpxC family. Requires Zn(2+) as cofactor.

It carries out the reaction a UDP-3-O-[(3R)-3-hydroxyacyl]-N-acetyl-alpha-D-glucosamine + H2O = a UDP-3-O-[(3R)-3-hydroxyacyl]-alpha-D-glucosamine + acetate. The protein operates within glycolipid biosynthesis; lipid IV(A) biosynthesis; lipid IV(A) from (3R)-3-hydroxytetradecanoyl-[acyl-carrier-protein] and UDP-N-acetyl-alpha-D-glucosamine: step 2/6. Functionally, catalyzes the hydrolysis of UDP-3-O-myristoyl-N-acetylglucosamine to form UDP-3-O-myristoylglucosamine and acetate, the committed step in lipid A biosynthesis. The chain is UDP-3-O-acyl-N-acetylglucosamine deacetylase from Chlamydia caviae (strain ATCC VR-813 / DSM 19441 / 03DC25 / GPIC) (Chlamydophila caviae).